An 80-amino-acid polypeptide reads, in one-letter code: Trefoil factor 3 (80 aa).

The signal sequence occupies residues 1–23; sequence MEARVLWLLVVVLVLGSSSLAVA. One can recognise a P-type domain in the interval 30 to 73; that stretch reads NLCEVPPKDRVDCGYPEITSEQCVNRGCCFDSSIHGVPWCFKPL. Cystine bridges form between Cys32–Cys58, Cys42–Cys57, and Cys52–Cys69.

In terms of assembly, monomer. Homodimer; disulfide-linked.

The protein resides in the secreted. It localises to the extracellular space. The protein localises to the extracellular matrix. Its subcellular location is the cytoplasm. Its function is as follows. Involved in the maintenance and repair of the intestinal mucosa. Promotes the mobility of epithelial cells in healing processes (motogen). The sequence is that of Trefoil factor 3 (TFF3) from Canis lupus familiaris (Dog).